We begin with the raw amino-acid sequence, 562 residues long: Cytosolic invertase 1 (562 aa).

It belongs to the glycosyl hydrolase 100 family.

Its subcellular location is the cytoplasm. The protein resides in the cytosol. The catalysed reaction is Hydrolysis of terminal non-reducing beta-D-fructofuranoside residues in beta-D-fructofuranosides.. Functionally, cytosolic invertase that cleaves sucrose into glucose and fructose and is involved in the regulation of primary root elongation, lateral root formation, floral transition and pollen development. The polypeptide is Cytosolic invertase 1 (Oryza sativa subsp. japonica (Rice)).